The sequence spans 188 residues: Putative manganese efflux pump MntP (188 aa).

The next 6 helical transmembrane spans lie at 1-21 (MLIQ…AVSI), 40-60 (LWFG…ASTF), 64-84 (VTAV…GNMV), 105-127 (HMLP…FAFM), 131-153 (IWLS…LYIG), and 166-186 (IAGG…HLGF).

The protein belongs to the MntP (TC 9.B.29) family.

It localises to the cell membrane. Functionally, probably functions as a manganese efflux pump. The chain is Putative manganese efflux pump MntP from Bifidobacterium adolescentis (strain ATCC 15703 / DSM 20083 / NCTC 11814 / E194a).